The primary structure comprises 705 residues: Glycogen [starch] synthase isoform 2 (705 aa).

Arg20 serves as a coordination point for UDP. Ser159 is subject to Phosphoserine. Positions 193 and 199 each coordinate UDP-alpha-D-glucose. Residues His280, Glu281, Gln283, His286, and Lys290 each coordinate alpha-D-glucose 6-phosphate. Residue Arg320 coordinates UDP. Arg320 provides a ligand contact to UDP-alpha-D-glucose. 2 positions are modified to phosphoserine: Ser363 and Ser467. Residue His500 participates in alpha-D-glucose 6-phosphate binding. UDP-alpha-D-glucose is bound by residues Glu509, Trp511, and Gly512. Thr514 contacts UDP. Alpha-D-glucose 6-phosphate contacts are provided by Arg583 and Arg587. A Phosphoserine modification is found at Ser651. Ser655 is modified (phosphoserine; by PHO85). A phosphoserine; by PKA mark is found at Ser661 and Ser663. Phosphothreonine; by PHO85 is present on Thr668. The tract at residues 686–705 (SLGVNPAADDDDDGPYADDS) is disordered. The span at 693 to 705 (ADDDDDGPYADDS) shows a compositional bias: acidic residues.

This sequence belongs to the glycosyltransferase 3 family. Interacts with PCL10. Post-translationally, phosphorylated by the cyclin-CDK PCL10-PHO85. Phosphorylation causes inactivation of enzyme.

It localises to the cytoplasm. The protein resides in the cytosol. It catalyses the reaction [(1-&gt;4)-alpha-D-glucosyl](n) + UDP-alpha-D-glucose = [(1-&gt;4)-alpha-D-glucosyl](n+1) + UDP + H(+). It functions in the pathway glycan biosynthesis; glycogen biosynthesis. Its activity is regulated as follows. Allosteric activation by glucose-6-phosphate, and phosphorylation by a cAMP-dependent kinase. Functionally, glycogen synthase participates in the glycogen biosynthetic process along with glycogenin and glycogen branching enzyme. Extends the primer composed of a few glucose units formed by glycogenin by adding new glucose units to it. In this context, glycogen synthase transfers the glycosyl residue from UDP-Glc to the non-reducing end of alpha-1,4-glucan. This is Glycogen [starch] synthase isoform 2 (GSY2) from Saccharomyces cerevisiae (strain ATCC 204508 / S288c) (Baker's yeast).